The primary structure comprises 214 residues: Putative ankyrin repeat protein RF_1081 (214 aa).

A compositionally biased stretch (polar residues) spans 1-14; it reads MRKQQIPTLSTSAL. The tract at residues 1-32 is disordered; the sequence is MRKQQIPTLSTSALDKSPGPGSPDSDIEMKST. The stretch at 67–135 is one ANK repeat; sequence NPNALLHEAA…EEPILVTKKD (69 aa).

The protein is Putative ankyrin repeat protein RF_1081 of Rickettsia felis (strain ATCC VR-1525 / URRWXCal2) (Rickettsia azadi).